The sequence spans 200 residues: Adenylyl-sulfate kinase (200 aa).

36–43 (GLSGSGKS) provides a ligand contact to ATP. The active-site Phosphoserine intermediate is S110.

Belongs to the APS kinase family.

It catalyses the reaction adenosine 5'-phosphosulfate + ATP = 3'-phosphoadenylyl sulfate + ADP + H(+). It participates in sulfur metabolism; hydrogen sulfide biosynthesis; sulfite from sulfate: step 2/3. In terms of biological role, catalyzes the synthesis of activated sulfate. The protein is Adenylyl-sulfate kinase of Clostridium acetobutylicum (strain ATCC 824 / DSM 792 / JCM 1419 / IAM 19013 / LMG 5710 / NBRC 13948 / NRRL B-527 / VKM B-1787 / 2291 / W).